The chain runs to 206 residues: Guanylate kinase (206 aa).

The region spanning 6 to 185 (GAILVLSGPS…AAKTLRIIAD (180 aa)) is the Guanylate kinase-like domain. 13–20 (GPSGAGKS) is a binding site for ATP.

It belongs to the guanylate kinase family.

The protein resides in the cytoplasm. The catalysed reaction is GMP + ATP = GDP + ADP. Essential for recycling GMP and indirectly, cGMP. The sequence is that of Guanylate kinase from Sulfurimonas denitrificans (strain ATCC 33889 / DSM 1251) (Thiomicrospira denitrificans (strain ATCC 33889 / DSM 1251)).